A 102-amino-acid polypeptide reads, in one-letter code: Small ribosomal subunit protein uS10 (102 aa).

Belongs to the universal ribosomal protein uS10 family. Part of the 30S ribosomal subunit.

Its function is as follows. Involved in the binding of tRNA to the ribosomes. In Bartonella henselae (strain ATCC 49882 / DSM 28221 / CCUG 30454 / Houston 1) (Rochalimaea henselae), this protein is Small ribosomal subunit protein uS10.